The primary structure comprises 449 residues: Xaa-Pro dipeptidase (449 aa).

Mn(2+) contacts are provided by Asp246, Asp257, His345, Glu390, and Glu429.

This sequence belongs to the peptidase M24B family. Bacterial-type prolidase subfamily. Requires Mn(2+) as cofactor.

It catalyses the reaction Xaa-L-Pro dipeptide + H2O = an L-alpha-amino acid + L-proline. In terms of biological role, splits dipeptides with a prolyl residue in the C-terminal position. This chain is Xaa-Pro dipeptidase, found in Yersinia enterocolitica serotype O:8 / biotype 1B (strain NCTC 13174 / 8081).